Consider the following 210-residue polypeptide: Urease accessory protein UreF (210 aa).

Belongs to the UreF family. As to quaternary structure, ureD, UreF and UreG form a complex that acts as a GTP-hydrolysis-dependent molecular chaperone, activating the urease apoprotein by helping to assemble the nickel containing metallocenter of UreC. The UreE protein probably delivers the nickel.

It localises to the cytoplasm. Required for maturation of urease via the functional incorporation of the urease nickel metallocenter. The sequence is that of Urease accessory protein UreF from Cereibacter sphaeroides (strain ATCC 17023 / DSM 158 / JCM 6121 / CCUG 31486 / LMG 2827 / NBRC 12203 / NCIMB 8253 / ATH 2.4.1.) (Rhodobacter sphaeroides).